Consider the following 421-residue polypeptide: Aspartokinase (421 aa).

Residue 7–10 (KYGG) participates in ATP binding. 25–30 (RIVATK) provides a ligand contact to substrate. An ATP-binding site is contributed by Ser-41. Substrate is bound by residues 45 to 49 (DTTDE), Glu-74, 125 to 126 (LD), 151 to 154 (RGGS), and Ser-154. ATP contacts are provided by residues 174-175 (SD), 180-185 (YTADPR), and Lys-210. ACT domains follow at residues 267–343 (VTVL…YDDQ) and 349–421 (LVGA…GTGR). Substrate-binding positions include Asp-274, 274–279 (DKPGEA), 292–294 (NID), Gln-298, 360–361 (VT), 374–375 (NV), and 381–382 (SE).

This sequence belongs to the aspartokinase family. Tetramer consisting of 2 isoforms Alpha (catalytic and regulation) and of a homodimer of 2 isoforms Beta (regulation).

It carries out the reaction L-aspartate + ATP = 4-phospho-L-aspartate + ADP. It participates in amino-acid biosynthesis; L-lysine biosynthesis via DAP pathway; (S)-tetrahydrodipicolinate from L-aspartate: step 1/4. Its pathway is amino-acid biosynthesis; L-methionine biosynthesis via de novo pathway; L-homoserine from L-aspartate: step 1/3. It functions in the pathway amino-acid biosynthesis; L-threonine biosynthesis; L-threonine from L-aspartate: step 1/5. In terms of biological role, catalyzes the phosphorylation of the beta-carboxyl group of aspartic acid with ATP to yield 4-phospho-L-aspartate, which is involved in the branched biosynthetic pathway leading to the biosynthesis of amino acids lysine, threonine, isoleucine and methionine. This is Aspartokinase (lysC) from Corynebacterium efficiens (strain DSM 44549 / YS-314 / AJ 12310 / JCM 11189 / NBRC 100395).